The primary structure comprises 583 residues: Septin-9 (583 aa).

Met1 carries the post-translational modification N-acetylmethionine. Polar residues predominate over residues 1 to 14; sequence MKKSYSGVTRTSSG. The interval 1–49 is disordered; that stretch reads MKKSYSGVTRTSSGRLRRLADPTGPALKRSFEVEEIEPPNSTPPRRVQT. Residue Ser30 is modified to Phosphoserine. Thr42 and Thr49 each carry phosphothreonine. Lys62 carries the N6-acetyllysine modification. The interval 79 to 105 is disordered; that stretch reads DSLSQRSPKPSLRRVELAGAKAPEPMS. 3 positions are modified to phosphoserine: Ser82, Ser85, and Ser89. Thr143 is modified (phosphothreonine). The disordered stretch occupies residues 166 to 252; it reads VETPASKIPE…TPSCVGDMAD (87 aa). Polar residues predominate over residues 204-221; that stretch reads LPSQTLENSEAPMSQLQS. Tyr276 is modified (phosphotyrosine). In terms of domain architecture, Septin-type G spans 293–565; that stretch reads QGFEFNIMVV…EAYRVKRLNE (273 aa). A G1 motif region spans residues 303–310; sequence GQSGLGKS. 303-310 serves as a coordination point for GTP; that stretch reads GQSGLGKS. Residues Ser325 and Ser330 each carry the phosphoserine modification. Residues Thr337, Gly363, 443-451, Gly499, and Arg514 each bind GTP; that span reads KADTLTLEE. Residues 360 to 363 form a G3 motif region; the sequence is DTPG. Residues 442 to 445 form a G4 motif region; that stretch reads AKAD.

The protein belongs to the TRAFAC class TrmE-Era-EngA-EngB-Septin-like GTPase superfamily. Septin GTPase family. Septins polymerize into heterooligomeric protein complexes that form filaments, and associate with cellular membranes, actin filaments, and microtubules. GTPase activity is required for filament formation. Interacts with SEPTIN2, SEPTIN6, SEPTIN7, SEPTIN11 and SEPTIN14. Interacts with RTKN and ARHGEF18. In terms of tissue distribution, expressed in all tissues examined except muscle. Isoforms are differentially expressed in testes, kidney, liver, heart, spleen and brain.

It is found in the cytoplasm. It localises to the cytoskeleton. Filament-forming cytoskeletal GTPase. May play a role in cytokinesis (Potential). The protein is Septin-9 of Mus musculus (Mouse).